Reading from the N-terminus, the 799-residue chain is Transcriptional activator FLO8 (799 aa).

Residues 1–10 (MSYKVNSSYP) show a composition bias toward polar residues. 8 disordered regions span residues 1-20 (MSYK…EQPY), 37-68 (TNSE…SDLK), 101-127 (AHLD…QNTF), 255-406 (TTGA…RVNK), 431-503 (NSKS…SVIL), 568-622 (ESGK…PHGF), 644-691 (VSQE…YDFD), and 705-758 (AYAS…NENQ). The span at 41 to 55 (QQRQQQQQQQQQQQQ) shows a compositional bias: low complexity. The 33-residue stretch at 73–105 (CKNTLNEYIFDFLTKSSLKNTAAAFAQDAHLDR) folds into the LisH domain. Polar residues predominate over residues 270 to 285 (DFTNVGPTQNRSQNVT). Over residues 307–317 (NNNTTNNTTNN) the composition is skewed to low complexity. Residues 318–340 (KSPVNQPKSLKTMHSTDKPNNVP) show a composition bias toward polar residues. Residues 341–353 (TSKSTRSRSATSK) show a composition bias toward low complexity. A compositionally biased stretch (basic residues) spans 354-370 (AKGKVKAGLVAKRRRKN). Composition is skewed to polar residues over residues 371 to 396 (NTAT…TTSE) and 460 to 480 (KAST…NSVV). The span at 482-497 (GKKRSPPNTRVSRRKS) shows a compositional bias: basic residues. Composition is skewed to polar residues over residues 584–593 (SKVSASSPLS) and 660–675 (GNDS…TLST).

This sequence belongs to the FLO8 family.

Its subcellular location is the nucleus. Required for diploid filamentous growth, haploid invasive growth and flocculation. Putative transcriptional activator of FLO1. This chain is Transcriptional activator FLO8 (FLO8), found in Saccharomyces cerevisiae (strain ATCC 204508 / S288c) (Baker's yeast).